Here is a 328-residue protein sequence, read N- to C-terminus: Glutathionyl-hydroquinone reductase YqjG (328 aa).

Residue cysteine 63 is the Nucleophile of the active site. Residues tryptophan 96, arginine 130–valine 133, and glutamate 148–serine 149 each bind glutathione. The region spanning proline 172 to tyrosine 296 is the GST C-terminal domain. Catalysis depends on tyrosine 195, which acts as the Proton donor/acceptor. Positions glutamine 203–isoleucine 311 are dimerization.

This sequence belongs to the GST superfamily. Xi-class GSH transferase family. Homodimer.

It catalyses the reaction 2-(glutathione-S-yl)-hydroquinone + glutathione = hydroquinone + glutathione disulfide. Its function is as follows. Catalyzes glutathione (GSH)-dependent reduction of glutathionyl-hydroquinones (GS-HQs) to the corresponding hydroquinones. Can use a variety of GS-HQs as substrates, such as GS-p-hydroquinone (GS-HQ), GS-hydroxy-p-hydroquinone (GS-HHQ), GS-methyl-p-hydroquinone (GS-MHQ), GS-menadiol, and GS-trichloro-p-hydroquinone (GS-TriCH). Also displays GSH-dependent disulfide-bond reduction activity toward HED (2-hydroxyethyl disulfide), and is able to catalyze DMA (dimethylarsinate) reduction. Exhibits no GSH transferase activity with 1-chloro-2,4-dinitrobenzene (CDNB). The polypeptide is Glutathionyl-hydroquinone reductase YqjG (yqjG) (Escherichia coli (strain K12)).